A 373-amino-acid chain; its full sequence is Securin (373 aa).

Basic and acidic residues predominate over residues 1–10 (MMPANEDKEN). The tract at residues 1–27 (MMPANEDKENNIVYTGNESSGINFPQT) is disordered. Residues 12–26 (IVYTGNESSGINFPQ) are compositionally biased toward polar residues. The D-box motif lies at 85–88 (RLPL). The interval 177 to 278 (ADSGKNEESS…LPYVPEGYSP (102 aa)) is disordered. Phosphoserine occurs at positions 185, 186, 212, and 213. Positions 185 to 194 (SSDDDEGNED) are enriched in acidic residues. Low complexity predominate over residues 225–235 (LFNEQGGLQQL). Residues 240–256 (TKNEQKTKNDKSDKTDD) show a composition bias toward basic and acidic residues. At S277 the chain carries Phosphoserine. A Phosphoserine; by CDC28 modification is found at S292.

Belongs to the securin family. Interacts with the caspase-like ESP1, and prevents its protease activity probably by covering its active site. Interacts with CDC20. In terms of processing, phosphorylated by CDC28. The phosphorylation may be important for ESP1 localization to the nucleus. Ubiquitinated by the anaphase promoting complex (APC) at the onset of anaphase, conducting to its degradation.

It is found in the cytoplasm. Its subcellular location is the nucleus. In terms of biological role, regulatory protein, which plays a central role in chromosome stability. Probably acts by blocking the action of key proteins. During the mitosis, it blocks Separase/ESP1 function, preventing the proteolysis of the cohesin complex and the subsequent segregation of the chromosomes. At the onset of anaphase, it is ubiquitinated, conducting to its destruction and to the liberation of ESP1. In Saccharomyces cerevisiae (strain ATCC 204508 / S288c) (Baker's yeast), this protein is Securin (PDS1).